A 940-amino-acid polypeptide reads, in one-letter code: MAEVTVSELAKSVGASVDRILAQMKQAGLSHQTPDDTVSDEEKQTLLSFLKSSHGESAAAPKKITLKRKTTTTLKTGSGSGRKTVNVEVRKKRTYVKRELTAEDATETAADEVLIPEQEQLESTSVAEIPESVSSDTAVEEIVADTVVEAEVEAASPEPEPEVEATPEPEVEDVVAEEAEPAAAEPAPAPVVEQRSSFVDDAEILRQRAAVRKKAEEEAEVARRKADAEKAEAAAKQKAEQAAVQKGSVEKPAAGDKDESKHHKKPKPKSETEEFDEEAKAKHNKKAGKAVKKVAGPKKVASALDYVEDKEEIDEVIHSAPKSKKGGQNNNSSNSGSRPLIKVANRHGFKKPTGKITYKVEIPEEIVVSELAQRMNVKAGEVVKHLFKLGTMVTINQAIDQETAQLVVEEMGHEAVLVSGDAVEQKLREQVVEVDDAELVARAPVVTVMGHVDHGKTSLLDYIRKTRVASGEAGGITQHIGAYRVNTSHGELAFLDTPGHAAFTAMRARGAQCTDVVILVVAADDGVMPQTEEAVQHARAAGVPLVVAVNKIDKEAADPDRVKNELSAKDVIPEDWGGDTQFINVSAQTGEGIEELLEAVALQAELLELSAPVNVPARGVVIESRMDKGRGVVATVLVQGGELKRGDIMLAGQSFGRVRAMVNEYGDNIDSAPPSTPVEILGLDTPPEAGDEFLVVPDERKAREVSEFRAEKERTERMQRQQAAKLENMFAGMGSDEKKILPIVLKTDVRGSLEAIQAALLDVGNDEVQVNFVGGGVGGITENDVNLALTSGAVIVGFNVRADNSARKLAESESAEIRYYSIIYQLIDEVKSALAGMLDPERVEEIVGIAEVRDVFRSPKFGQVAGCMVVEGNVYRNKPIRVLRDNVVIFEGELESLRRFKDDVNEVRNGMECGIGVKNYDVKVGDQIEVFDVKEVAREL.

Disordered regions lie at residues 116-137 (PEQE…SSDT), 151-196 (EVEA…EQRS), 210-294 (AVRK…VKKV), and 318-346 (HSAP…VANR). Polar residues predominate over residues 121-137 (LESTSVAEIPESVSSDT). The span at 159-180 (PEPEVEATPEPEVEDVVAEEAE) shows a compositional bias: acidic residues. Positions 181 to 193 (PAAAEPAPAPVVE) are enriched in low complexity. The segment covering 213-239 (KKAEEEAEVARRKADAEKAEAAAKQKA) has biased composition (basic and acidic residues). The span at 282-294 (KHNKKAGKAVKKV) shows a compositional bias: basic residues. Over residues 326–337 (GGQNNNSSNSGS) the composition is skewed to low complexity. The 170-residue stretch at 441–610 (ARAPVVTVMG…ALQAELLELS (170 aa)) folds into the tr-type G domain. A G1 region spans residues 450–457 (GHVDHGKT). A GTP-binding site is contributed by 450 to 457 (GHVDHGKT). The segment at 475–479 (GITQH) is G2. Residues 496–499 (DTPG) are G3. GTP-binding positions include 496-500 (DTPGH) and 550-553 (NKID). The G4 stretch occupies residues 550 to 553 (NKID). The segment at 586-588 (SAQ) is G5.

The protein belongs to the TRAFAC class translation factor GTPase superfamily. Classic translation factor GTPase family. IF-2 subfamily.

It localises to the cytoplasm. In terms of biological role, one of the essential components for the initiation of protein synthesis. Protects formylmethionyl-tRNA from spontaneous hydrolysis and promotes its binding to the 30S ribosomal subunits. Also involved in the hydrolysis of GTP during the formation of the 70S ribosomal complex. The chain is Translation initiation factor IF-2 from Teredinibacter turnerae (strain ATCC 39867 / T7901).